The chain runs to 417 residues: L-rhamnose isomerase (417 aa).

3 residues coordinate Mn(2+): histidine 261, aspartate 293, and aspartate 295.

It belongs to the rhamnose isomerase family. It depends on Mn(2+) as a cofactor.

The protein localises to the cytoplasm. The enzyme catalyses L-rhamnopyranose = L-rhamnulose. It participates in carbohydrate degradation; L-rhamnose degradation; glycerone phosphate from L-rhamnose: step 1/3. Its function is as follows. Catalyzes the interconversion of L-rhamnose and L-rhamnulose. The chain is L-rhamnose isomerase from Oceanobacillus iheyensis (strain DSM 14371 / CIP 107618 / JCM 11309 / KCTC 3954 / HTE831).